The sequence spans 340 residues: tRNA N6-adenosine threonylcarbamoyltransferase (340 aa).

The Fe cation site is built by His111 and His115. Residues 134–138, Asp167, Gly180, and Asn272 each bind substrate; that span reads LVSGG. A Fe cation-binding site is contributed by Asp300.

The protein belongs to the KAE1 / TsaD family. The cofactor is Fe(2+).

It is found in the cytoplasm. The enzyme catalyses L-threonylcarbamoyladenylate + adenosine(37) in tRNA = N(6)-L-threonylcarbamoyladenosine(37) in tRNA + AMP + H(+). Required for the formation of a threonylcarbamoyl group on adenosine at position 37 (t(6)A37) in tRNAs that read codons beginning with adenine. Is involved in the transfer of the threonylcarbamoyl moiety of threonylcarbamoyl-AMP (TC-AMP) to the N6 group of A37, together with TsaE and TsaB. TsaD likely plays a direct catalytic role in this reaction. This Proteus mirabilis (strain HI4320) protein is tRNA N6-adenosine threonylcarbamoyltransferase.